We begin with the raw amino-acid sequence, 156 residues long: Transcription antitermination protein NusB (156 aa).

The protein belongs to the NusB family.

Involved in transcription antitermination. Required for transcription of ribosomal RNA (rRNA) genes. Binds specifically to the boxA antiterminator sequence of the ribosomal RNA (rrn) operons. The protein is Transcription antitermination protein NusB of Mycolicibacterium paratuberculosis (strain ATCC BAA-968 / K-10) (Mycobacterium paratuberculosis).